Reading from the N-terminus, the 192-residue chain is uncharacterized protein (192 aa).

This is an uncharacterized protein from Picosynechococcus sp. (strain ATCC 27264 / PCC 7002 / PR-6) (Agmenellum quadruplicatum).